Consider the following 443-residue polypeptide: ATP-dependent protease ATPase subunit HslU (443 aa).

ATP is bound by residues Ile18, 60–65, Asp256, Glu321, and Arg393; that span reads GVGKTE.

This sequence belongs to the ClpX chaperone family. HslU subfamily. In terms of assembly, a double ring-shaped homohexamer of HslV is capped on each side by a ring-shaped HslU homohexamer. The assembly of the HslU/HslV complex is dependent on binding of ATP.

Its subcellular location is the cytoplasm. In terms of biological role, ATPase subunit of a proteasome-like degradation complex; this subunit has chaperone activity. The binding of ATP and its subsequent hydrolysis by HslU are essential for unfolding of protein substrates subsequently hydrolyzed by HslV. HslU recognizes the N-terminal part of its protein substrates and unfolds these before they are guided to HslV for hydrolysis. The chain is ATP-dependent protease ATPase subunit HslU from Edwardsiella ictaluri (strain 93-146).